A 762-amino-acid chain; its full sequence is 5-methyltetrahydropteroyltriglutamate--homocysteine methyltransferase (762 aa).

5-methyltetrahydropteroyltri-L-glutamate is bound by residues 17–20 (REWK) and lysine 111. Residues 435–437 (IGS) and glutamate 488 each bind L-homocysteine. Residues 435–437 (IGS) and glutamate 488 each bind L-methionine. Residues 519-520 (RC) and tryptophan 565 each bind 5-methyltetrahydropteroyltri-L-glutamate. Position 603 (aspartate 603) interacts with L-homocysteine. Position 603 (aspartate 603) interacts with L-methionine. Residue glutamate 609 participates in 5-methyltetrahydropteroyltri-L-glutamate binding. Histidine 645, cysteine 647, and glutamate 669 together coordinate Zn(2+). Histidine 698 functions as the Proton donor in the catalytic mechanism. Cysteine 730 serves as a coordination point for Zn(2+).

It belongs to the vitamin-B12 independent methionine synthase family. It depends on Zn(2+) as a cofactor.

The enzyme catalyses 5-methyltetrahydropteroyltri-L-glutamate + L-homocysteine = tetrahydropteroyltri-L-glutamate + L-methionine. It functions in the pathway amino-acid biosynthesis; L-methionine biosynthesis via de novo pathway; L-methionine from L-homocysteine (MetE route): step 1/1. In terms of biological role, catalyzes the transfer of a methyl group from 5-methyltetrahydrofolate to homocysteine resulting in methionine formation. This is 5-methyltetrahydropteroyltriglutamate--homocysteine methyltransferase from Bacillus cereus (strain G9842).